The following is a 238-amino-acid chain: IkB-like protein (238 aa).

ANK repeat units follow at residues 47–76 (NGSS…YPGE), 86–119 (DGNS…RICL), 123–152 (NGIT…DPTQ), and 157–186 (RGFT…KPLY). The Nuclear localization signal motif lies at 80–86 (PHRRDKD). The Nuclear localization signal signature appears at 202–213 (KKKPKIIITGCK). The PxIxITxC motif; Interaction with host PPP3CA signature appears at 205 to 212 (PKIIITGC). Positions 227 to 230 (FLCV) match the FLCV motif motif.

This sequence belongs to the asfivirus A238L family. In terms of assembly, interacts with host PPIA. Interacts with host PPP3CA/Calcineurin. Interacts with host RELA/p65; interaction of the 32 kDa form with host RELA results in the formation of a stable complex with NF-kappa-B. Interacts with host PPP3R1. Interacts with host EP300; this interaction inhibits the association of host EP300 with host RELA, JUN and NFATC2. Post-translationally, the protein exists in a 28 kDa and a 32 kDa form, probably due to post-translational modifications which are neither phosphorylation, nor sumoylation.

Its subcellular location is the host nucleus. It localises to the host cytoplasm. In terms of biological role, ikB-like protein that inhibits the binding of NF-kappa-B to DNA, thereby downregulating pro-inflammatory cytokine production. Forms a heterodimer with the NF-kappa-B subunit RELA/p65 and prevents the activation of the NF-kappa-B transcription factor. Inhibits calcineurin function, which is required for the induction of nuclear factor of activated T cells (NFAT)-dependent immune response genes. Prevents the binding of substrates to calcineurin without affecting the phosphatase activity. Does not contain the serine residues that are phosphorylated by host IkB kinase and thus is not degraded following stimulation of the NFkB pathway. This is IkB-like protein (A238L) from African swine fever virus (isolate Warthog/Namibia/Wart80/1980) (ASFV).